A 403-amino-acid chain; its full sequence is Imidazolonepropionase (403 aa).

H69 and H71 together coordinate Fe(3+). H69 and H71 together coordinate Zn(2+). 4-imidazolone-5-propanoate-binding residues include R78, Y141, and H174. N-formimidoyl-L-glutamate is bound at residue Y141. H239 contacts Fe(3+). H239 contributes to the Zn(2+) binding site. Q242 lines the 4-imidazolone-5-propanoate pocket. D314 is a Fe(3+) binding site. A Zn(2+)-binding site is contributed by D314. N-formimidoyl-L-glutamate-binding residues include N316 and G318. S319 contributes to the 4-imidazolone-5-propanoate binding site.

This sequence belongs to the metallo-dependent hydrolases superfamily. HutI family. It depends on Zn(2+) as a cofactor. Fe(3+) is required as a cofactor.

It is found in the cytoplasm. It catalyses the reaction 4-imidazolone-5-propanoate + H2O = N-formimidoyl-L-glutamate. It functions in the pathway amino-acid degradation; L-histidine degradation into L-glutamate; N-formimidoyl-L-glutamate from L-histidine: step 3/3. Functionally, catalyzes the hydrolytic cleavage of the carbon-nitrogen bond in imidazolone-5-propanoate to yield N-formimidoyl-L-glutamate. It is the third step in the universal histidine degradation pathway. This Legionella pneumophila (strain Lens) protein is Imidazolonepropionase.